We begin with the raw amino-acid sequence, 40 residues long: Photosystem II reaction center protein J (40 aa).

A helical membrane pass occupies residues 8–28 (IPLWIIGTVTGIIVIGLIGIF).

This sequence belongs to the PsbJ family. As to quaternary structure, PSII is composed of 1 copy each of membrane proteins PsbA, PsbB, PsbC, PsbD, PsbE, PsbF, PsbH, PsbI, PsbJ, PsbK, PsbL, PsbM, PsbT, PsbX, PsbY, PsbZ, Psb30/Ycf12, at least 3 peripheral proteins of the oxygen-evolving complex and a large number of cofactors. It forms dimeric complexes.

It is found in the plastid. It localises to the chloroplast thylakoid membrane. Functionally, one of the components of the core complex of photosystem II (PSII). PSII is a light-driven water:plastoquinone oxidoreductase that uses light energy to abstract electrons from H(2)O, generating O(2) and a proton gradient subsequently used for ATP formation. It consists of a core antenna complex that captures photons, and an electron transfer chain that converts photonic excitation into a charge separation. The polypeptide is Photosystem II reaction center protein J (Morus indica (Mulberry)).